We begin with the raw amino-acid sequence, 163 residues long: Crossover junction endodeoxyribonuclease RuvC (163 aa).

Active-site residues include aspartate 7, glutamate 66, and aspartate 139. Mg(2+)-binding residues include aspartate 7, glutamate 66, and aspartate 139.

It belongs to the RuvC family. In terms of assembly, homodimer which binds Holliday junction (HJ) DNA. The HJ becomes 2-fold symmetrical on binding to RuvC with unstacked arms; it has a different conformation from HJ DNA in complex with RuvA. In the full resolvosome a probable DNA-RuvA(4)-RuvB(12)-RuvC(2) complex forms which resolves the HJ. Mg(2+) is required as a cofactor.

It localises to the cytoplasm. It catalyses the reaction Endonucleolytic cleavage at a junction such as a reciprocal single-stranded crossover between two homologous DNA duplexes (Holliday junction).. Functionally, the RuvA-RuvB-RuvC complex processes Holliday junction (HJ) DNA during genetic recombination and DNA repair. Endonuclease that resolves HJ intermediates. Cleaves cruciform DNA by making single-stranded nicks across the HJ at symmetrical positions within the homologous arms, yielding a 5'-phosphate and a 3'-hydroxyl group; requires a central core of homology in the junction. The consensus cleavage sequence is 5'-(A/T)TT(C/G)-3'. Cleavage occurs on the 3'-side of the TT dinucleotide at the point of strand exchange. HJ branch migration catalyzed by RuvA-RuvB allows RuvC to scan DNA until it finds its consensus sequence, where it cleaves and resolves the cruciform DNA. The polypeptide is Crossover junction endodeoxyribonuclease RuvC (Thermomicrobium roseum (strain ATCC 27502 / DSM 5159 / P-2)).